A 337-amino-acid chain; its full sequence is D-alanine--D-alanine ligase (337 aa).

Residues lysine 124 to asparagine 330 enclose the ATP-grasp domain. Alanine 154–glutamate 209 is an ATP binding site. Mg(2+) is bound by residues aspartate 284, glutamate 297, and asparagine 299.

This sequence belongs to the D-alanine--D-alanine ligase family. The cofactor is Mg(2+). Mn(2+) is required as a cofactor.

It localises to the cytoplasm. It catalyses the reaction 2 D-alanine + ATP = D-alanyl-D-alanine + ADP + phosphate + H(+). It participates in cell wall biogenesis; peptidoglycan biosynthesis. Cell wall formation. The sequence is that of D-alanine--D-alanine ligase from Shewanella baltica (strain OS195).